The sequence spans 149 residues: Large ribosomal subunit protein bL9 (149 aa).

The protein belongs to the bacterial ribosomal protein bL9 family.

Functionally, binds to the 23S rRNA. The protein is Large ribosomal subunit protein bL9 of Haemophilus influenzae (strain PittEE).